The following is a 274-amino-acid chain: Pantothenate synthetase (274 aa).

27–34 (MGALHQGH) is an ATP binding site. His-34 acts as the Proton donor in catalysis. Gln-58 provides a ligand contact to (R)-pantoate. Residue Gln-58 participates in beta-alanine binding. 144-147 (GKKD) provides a ligand contact to ATP. A (R)-pantoate-binding site is contributed by Gln-150. ATP-binding positions include Ile-173 and 181-184 (LSSR).

It belongs to the pantothenate synthetase family. Homodimer.

It localises to the cytoplasm. It catalyses the reaction (R)-pantoate + beta-alanine + ATP = (R)-pantothenate + AMP + diphosphate + H(+). It participates in cofactor biosynthesis; (R)-pantothenate biosynthesis; (R)-pantothenate from (R)-pantoate and beta-alanine: step 1/1. Its function is as follows. Catalyzes the condensation of pantoate with beta-alanine in an ATP-dependent reaction via a pantoyl-adenylate intermediate. This chain is Pantothenate synthetase, found in Sulfurovum sp. (strain NBC37-1).